The sequence spans 426 residues: Histone-binding protein RBBP7 (426 aa).

WD repeat units follow at residues 47-123, 129-174, 182-218, 229-270, 276-313, 319-370, and 377-404; these read QWLP…KINH, RARY…LRLR, GLSWNPNLSGNLLSASDDHTICLWDISGAPKEGKIVD, VVED…HSVD, VNCLSFNPYSEFILATGSADKTVALWDLRNLKLKLHSF, EIFQ…LFIH, and ISDFSWNPNEPWVICSVSEDNIMQVWQM.

Belongs to the WD repeat RBAP46/RBAP48/MSI1 family. In terms of assembly, binds directly to helix 1 of the histone fold of histone H4, a region that is not accessible when H4 is in chromatin.

Its subcellular location is the nucleus. Its function is as follows. Core histone-binding subunit that may target chromatin remodeling factors, histone acetyltransferases and histone deacetylases to their histone substrates in a manner that is regulated by nucleosomal DNA. Component of several complexes which regulate chromatin metabolism. This chain is Histone-binding protein RBBP7 (rbbp7), found in Danio rerio (Zebrafish).